A 324-amino-acid polypeptide reads, in one-letter code: Putative S-adenosyl-L-methionine-dependent methyltransferase MUL_0818 (324 aa).

Residues Asp-138 and 167-168 (DL) each bind S-adenosyl-L-methionine.

The protein belongs to the UPF0677 family.

Exhibits S-adenosyl-L-methionine-dependent methyltransferase activity. The chain is Putative S-adenosyl-L-methionine-dependent methyltransferase MUL_0818 from Mycobacterium ulcerans (strain Agy99).